A 216-amino-acid chain; its full sequence is uncharacterized protein (216 aa).

The region spanning 1-216 (MVVKIVEAYE…DVTFLKLKLK (216 aa)) is the N-acetyltransferase domain.

This sequence belongs to the acetyltransferase family.

This is an uncharacterized protein from Dictyostelium discoideum (Social amoeba).